The chain runs to 344 residues: Neurotrimin (344 aa).

The N-terminal stretch at 1–33 is a signal peptide; that stretch reads MGVCGYLFLPWKCLVVVSLRLLFLVPTGVPVRS. 3 Ig-like C2-type domains span residues 39–126, 136–218, and 222–309; these read PKAM…PKTS, PKIV…VKVT, and PPYI…ASIM. 3 N-linked (GlcNAc...) asparagine glycosylation sites follow: Asn44, Asn70, and Asn152. The cysteines at positions 57 and 115 are disulfide-linked. Disulfide bonds link Cys157–Cys201 and Cys243–Cys295. N-linked (GlcNAc...) asparagine glycosylation is found at Asn284, Asn292, and Asn305. Asn321 carries GPI-anchor amidated asparagine; alternate lipidation. Asn321 carries N-linked (GlcNAc...) asparagine; alternate glycosylation. Positions 322 to 344 are cleaved as a propeptide — removed in mature form; it reads GTSRRAGCIWLLPLLVLHLLLKF.

It belongs to the immunoglobulin superfamily. IgLON family.

It localises to the cell membrane. Functionally, neural cell adhesion molecule. The sequence is that of Neurotrimin (Ntm) from Mus musculus (Mouse).